We begin with the raw amino-acid sequence, 491 residues long: Ketol-acid reductoisomerase (NADP(+)) (491 aa).

In terms of domain architecture, KARI N-terminal Rossmann spans 15-208; sequence AQLGKCRFMG…GGHRAGVLES (194 aa). NADP(+)-binding positions include 45 to 48, Arg68, Arg76, Ser78, and 108 to 110; these read CGAQ and DKQ. His132 is an active-site residue. Gly158 provides a ligand contact to NADP(+). 2 consecutive KARI C-terminal knotted domains span residues 209–344 and 345–484; these read SFVA…TAPQ and YEGK…MTDM. Asp217, Glu221, Glu389, and Glu393 together coordinate Mg(2+). Residue Ser414 participates in substrate binding.

It belongs to the ketol-acid reductoisomerase family. The cofactor is Mg(2+).

It catalyses the reaction (2R)-2,3-dihydroxy-3-methylbutanoate + NADP(+) = (2S)-2-acetolactate + NADPH + H(+). The catalysed reaction is (2R,3R)-2,3-dihydroxy-3-methylpentanoate + NADP(+) = (S)-2-ethyl-2-hydroxy-3-oxobutanoate + NADPH + H(+). It participates in amino-acid biosynthesis; L-isoleucine biosynthesis; L-isoleucine from 2-oxobutanoate: step 2/4. The protein operates within amino-acid biosynthesis; L-valine biosynthesis; L-valine from pyruvate: step 2/4. Involved in the biosynthesis of branched-chain amino acids (BCAA). Catalyzes an alkyl-migration followed by a ketol-acid reduction of (S)-2-acetolactate (S2AL) to yield (R)-2,3-dihydroxy-isovalerate. In the isomerase reaction, S2AL is rearranged via a Mg-dependent methyl migration to produce 3-hydroxy-3-methyl-2-ketobutyrate (HMKB). In the reductase reaction, this 2-ketoacid undergoes a metal-dependent reduction by NADPH to yield (R)-2,3-dihydroxy-isovalerate. The chain is Ketol-acid reductoisomerase (NADP(+)) from Escherichia coli O157:H7.